A 177-amino-acid polypeptide reads, in one-letter code: Large ribosomal subunit protein uL6 (177 aa).

This sequence belongs to the universal ribosomal protein uL6 family. As to quaternary structure, part of the 50S ribosomal subunit.

This protein binds to the 23S rRNA, and is important in its secondary structure. It is located near the subunit interface in the base of the L7/L12 stalk, and near the tRNA binding site of the peptidyltransferase center. The polypeptide is Large ribosomal subunit protein uL6 (Rubrobacter xylanophilus (strain DSM 9941 / JCM 11954 / NBRC 16129 / PRD-1)).